We begin with the raw amino-acid sequence, 343 residues long: Heat-inducible transcription repressor HrcA (343 aa).

Belongs to the HrcA family.

In terms of biological role, negative regulator of class I heat shock genes (grpE-dnaK-dnaJ and groELS operons). Prevents heat-shock induction of these operons. This Mycolicibacterium gilvum (strain PYR-GCK) (Mycobacterium gilvum (strain PYR-GCK)) protein is Heat-inducible transcription repressor HrcA.